The sequence spans 180 residues: NADH-quinone oxidoreductase subunit I (180 aa).

4Fe-4S ferredoxin-type domains follow at residues 48 to 80 and 90 to 119; these read IVLTRDPDGDERCVACNLCAVACPVGCISLQKS and EFFRINFSRCIFCGLCEEACPTTAIQLTPD. Residues Cys-60, Cys-63, Cys-66, Cys-70, Cys-99, Cys-102, Cys-105, and Cys-109 each coordinate [4Fe-4S] cluster. Basic and acidic residues predominate over residues 161 to 174; the sequence is KPKGDAENEAKPID. The interval 161-180 is disordered; that stretch reads KPKGDAENEAKPIDVKSLLP.

This sequence belongs to the complex I 23 kDa subunit family. As to quaternary structure, NDH-1 is composed of 14 different subunits. Subunits NuoA, H, J, K, L, M, N constitute the membrane sector of the complex. The cofactor is [4Fe-4S] cluster.

Its subcellular location is the cell inner membrane. The enzyme catalyses a quinone + NADH + 5 H(+)(in) = a quinol + NAD(+) + 4 H(+)(out). Functionally, NDH-1 shuttles electrons from NADH, via FMN and iron-sulfur (Fe-S) centers, to quinones in the respiratory chain. The immediate electron acceptor for the enzyme in this species is believed to be ubiquinone. Couples the redox reaction to proton translocation (for every two electrons transferred, four hydrogen ions are translocated across the cytoplasmic membrane), and thus conserves the redox energy in a proton gradient. The chain is NADH-quinone oxidoreductase subunit I from Aeromonas hydrophila subsp. hydrophila (strain ATCC 7966 / DSM 30187 / BCRC 13018 / CCUG 14551 / JCM 1027 / KCTC 2358 / NCIMB 9240 / NCTC 8049).